An 806-amino-acid chain; its full sequence is MWGRFLAPEAGGRDSPSGARSFPAGSDYSSAWLPGNESLWQATAVPSNHRNNHLRRHSITSDSGDTGIGTSCSDSVEDHSTSSGTLSFKPSRSLVTLPTAHVMPSNSSASVSKHRESLTPDGSKWSTSLMQTLGDHSRGERDSSLDMKDFRPLRKWSSLSKLTAPDTRNHSGIAYPQELRNSLEMTGKGKPFMSHLRTFGPSCLHDSMELLKLEDKEINKKRSSTLDCKYKFESCNKEDVRVSSSALRRQTLDMTYSALPESKPIVTGSETFESPKYLMLGQQAVGGVPIQPSVRTQMWLTEQLRTNPLEGRTTDDSYSLAPWQQPQTEEFQQGSETPMQVLTGSSRQSYSPPGFQDFSKWESVLKIKEGLLRQKEIVIDRQKQQINHLHERIRDNELRAQHAMLGHYVNCEDSYVSNLQPQYESSSGQSLFTEQPLSHPHQEELEQKLASTEKEVLQLNEFLKQRISQFSEEKKKLEEKLKTRDRYISSLKKKCQKESEQNKEKQRRIETLEKYLADLPTLDDVQSQSLQLQVLEEKNKNLQETLIDTEKQLEEIKKQCQDKEVQLLCQKKKEKELVTSVQSLQQKVEKCLEDGIRLPMLDAKQLQSENDNLREQNATASKIIESQQDEINRMILEIQSMQGKLCEEKLTARSTVEELGRKEGSLQRLTEALLENQRQMGETYSLLDQGHEAEQSRPQTIHSKWPLFDLTVIDQLFKEMSYCLFDLKALCSILNQRAQGKEPNLSLLLGIRSMNCSAEETENDHSPETLTKKLSDVCQLRRDIDELRTTISDRYAQDMGDNCVTQ.

Disordered regions lie at residues 1 to 27 (MWGR…AGSD), 51 to 89 (NNHL…LSFK), and 101 to 146 (HVMP…SSLD). S15 is modified (phosphoserine). Polar residues predominate over residues 60 to 74 (TSDSGDTGIGTSCSD). The segment covering 135 to 146 (DHSRGERDSSLD) has biased composition (basic and acidic residues). S207 carries the phosphoserine modification. The disordered stretch occupies residues 308–353 (PLEGRTTDDSYSLAPWQQPQTEEFQQGSETPMQVLTGSSRQSYSPP). A compositionally biased stretch (polar residues) spans 322–351 (PWQQPQTEEFQQGSETPMQVLTGSSRQSYS). Positions 442-644 (QEELEQKLAS…ILEIQSMQGK (203 aa)) form a coiled coil.

Belongs to the CEP85 family.

Its subcellular location is the cytoplasm. It is found in the cytoskeleton. The protein resides in the microtubule organizing center. The protein localises to the centrosome. Functionally, plays an essential role in neuronal cell migration. The protein is Centrosomal protein of 85 kDa-like of Mus musculus (Mouse).